The following is a 176-amino-acid chain: Nucleoside triphosphate/diphosphate phosphatase (176 aa).

The Proton donor role is filled by Arg-23. Residues Asn-87, Asp-103, Asp-105, Asp-107, Asp-120, and Glu-123 each contribute to the Mg(2+) site.

This sequence belongs to the Ntdp family. It depends on Mg(2+) as a cofactor.

It carries out the reaction a ribonucleoside 5'-triphosphate + H2O = a ribonucleoside 5'-diphosphate + phosphate + H(+). It catalyses the reaction a ribonucleoside 5'-diphosphate + H2O = a ribonucleoside 5'-phosphate + phosphate + H(+). Functionally, has nucleoside phosphatase activity towards nucleoside triphosphates and nucleoside diphosphates. The sequence is that of Nucleoside triphosphate/diphosphate phosphatase from Bacillus mycoides (strain KBAB4) (Bacillus weihenstephanensis).